Consider the following 1063-residue polypeptide: Structural polyprotein (1063 aa).

Residues 1 to 131 (MASTTPITME…LGPPTNPFQA (131 aa)) are disordered. Residues 30-69 (GASQSRRPRPPRQRDSSTSGDDSGRDSGGPRRRRGNRGRG) form a human C1QBP/SF2P32-binding region. Serine 46 is modified (phosphoserine; by host). The span at 59–69 (PRRRRGNRGRG) shows a compositional bias: basic residues. Over residues 93–107 (APKPSRAPPQQPQPP) the composition is skewed to pro residues. Residues cysteine 153 and cysteine 197 are joined by a disulfide bond. The tract at residues 279–300 (GAPQAFLAGLLLAAVAVGTARA) is functions as E2 signal peptide. Residues 301 to 534 (GLQPRADMAA…LWLATANALS (234 aa)) lie on the Extracellular side of the membrane. A disordered region spans residues 305–347 (RADMAAPPAPPQPPCAHGQHYGHHHHQLPFLGHDGHHGGTLRV). N-linked (GlcNAc...) asparagine; by host glycosylation is found at asparagine 353, asparagine 371, asparagine 410, and asparagine 429. The helical transmembrane segment at 535 to 555 (LDHALAAFVLLFPWVLIFMVC) threads the bilayer. The Cytoplasmic segment spans residues 556–582 (RRACRRRGAAAALTAVVLQGYNPPAYG). Positions 563–582 (GAAAALTAVVLQGYNPPAYG) are functions as E1 signal peptide. Topologically, residues 583–1028 (EEAFTYLCTA…QTWAEWAAAH (446 aa)) are extracellular. 8 cysteine pairs are disulfide-bonded: cysteine 590/cysteine 595, cysteine 619/cysteine 824, cysteine 641/cysteine 653, cysteine 699/cysteine 712, cysteine 758/cysteine 767, cysteine 807/cysteine 817, cysteine 931/cysteine 934, and cysteine 950/cysteine 983. N-linked (GlcNAc...) asparagine; by host glycosylation occurs at asparagine 658. 2 residues coordinate Ca(2+): asparagine 670 and alanine 671. Positions 718 and 719 each coordinate Ca(2+). Residues asparagine 759 and asparagine 791 are each glycosylated (N-linked (GlcNAc...) asparagine; by host). Residues threonine 1011 and threonine 1012 are each glycosylated (O-linked (GalNAc...) threonine; by host). Residues 1029-1049 (WWQLTLGAVCALLLAGLLACC) form a helical membrane-spanning segment. Residues 1050–1063 (AKCLYYLRGAIAPR) are Extracellular-facing.

Homodimer; further assembles into homooligomer. Interacts with human C1QBP. Interacts (via N-terminus) with protease/methyltransferase p150. As to quaternary structure, heterodimer with spike glycoprotein E2. In terms of assembly, heterodimer with spike glycoprotein E1. Post-translationally, structural polyprotein: Specific enzymatic cleavages in vivo yield mature proteins. Two signal peptidase-mediated cleavages within the polyprotein produce the structural proteins capsid, E2, and E1. The E2 signal peptide remains attached to the C-terminus of the capsid protein after cleavage by the signal peptidase. Another signal peptide at E2 C-terminus directs E1 to the ER, with a similar mechanism. In terms of processing, contains three N-linked oligosaccharides. Capsid is phosphorylated on Ser-46 by host. This phosphorylation negatively regulates capsid protein RNA-binding activity. Dephosphorylated by human PP1A.

The protein resides in the virion. The protein localises to the host cytoplasm. It localises to the host mitochondrion. It is found in the virion membrane. Its subcellular location is the host Golgi apparatus membrane. Capsid protein interacts with genomic RNA and assembles into icosahedric core particles 65-70 nm in diameter. The resulting nucleocapsid eventually associates with the cytoplasmic domain of E2 at the cell membrane, leading to budding and formation of mature virions from host Golgi membranes. Phosphorylation negatively regulates RNA-binding activity, possibly delaying virion assembly during the viral replication phase. Capsid protein dimerizes and becomes disulfide-linked in the virion. Modulates genomic RNA replication. Modulates subgenomic RNA synthesis by interacting with human C1QBP/SF2P32. Induces both perinuclear clustering of mitochondria and the formation of electron-dense intermitochondrial plaques, both hallmarks of rubella virus infected cells. Induces apoptosis when expressed in transfected cells. Its function is as follows. Responsible for viral attachment to target host cell, by binding to the cell receptor. Its transport to the plasma membrane depends on interaction with E1 protein. The surface glycoproteins display an irregular helical organization and a pseudo-tetrameric inner nucleocapsid arrangement. Functionally, class II viral fusion protein. Fusion activity is inactive as long as E1 is bound to E2 in mature virion. After virus attachment to target cell and clathrin-mediated endocytosis, acidification of the endosome would induce dissociation of E1/E2 heterodimer and concomitant trimerization of the E1 subunits. This E1 homotrimer is fusion active, and promotes release of viral nucleocapsid in cytoplasm after endosome and viral membrane fusion. The cytoplasmic tail of spike glycoprotein E1 modulates virus release. The surface glycoproteins display an irregular helical organization and a pseudo-tetrameric inner nucleocapsid arrangement. This chain is Structural polyprotein, found in Rubella virus (strain RN-UK86) (RUBV).